A 328-amino-acid chain; its full sequence is NADH:quinone reductase (328 aa).

FMN is bound by residues 22 to 24 (GMQ), threonine 75, lysine 124, alanine 150, 178 to 180 (SGG), and 201 to 202 (GT).

This sequence belongs to the nitronate monooxygenase family. Monomer. Requires FMN as cofactor.

It catalyses the reaction a quinone + NADH + H(+) = a quinol + NAD(+). Functionally, catalyzes the NADH-dependent reduction of a broad spectrum of quinone substrates, generating the corresponding hydroquinones. Highly prefers NADH to NADPH as a reducing substrate. Also displays a small NADH oxidase activity. Does not exhibit nitronate monooxygenase activity; is inactive against propionate 3-nitronate, 3-nitropropionate, nitroethane, 1-nitropropane, 2-nitropropane, and the anionic forms ethylnitronate, propyl-1-nitronate, and propyl-2-nitronate. Has no azoreductase activity since it is not able to reduce the azo dye methyl red with NADH. May be required to maintain an appropriate [NAD(+)]/[NADH] ratio for the catabolism of fatty acids in P.aeruginosa PAO1. The chain is NADH:quinone reductase from Pseudomonas aeruginosa (strain ATCC 15692 / DSM 22644 / CIP 104116 / JCM 14847 / LMG 12228 / 1C / PRS 101 / PAO1).